Here is a 521-residue protein sequence, read N- to C-terminus: NADH-quinone oxidoreductase subunit N (521 aa).

The next 14 membrane-spanning stretches (helical) occupy residues 15–35 (LAPELILAAMFLILIVTDLIL), 43–63 (IIGWLSLAGLLLSLAAVIWRM), 98–118 (LLKIIFLIGTSLVVLLGLGST), 128–148 (AEFYYLLLPAAAGAMIMASSG), 150–170 (LVTLYIGLELLSITTYVLVGL), 185–205 (VVTGGIASAFVLFGMSYLYGV), 227–247 (ALVYVGFFFLIAGFGIKIAAA), 261–281 (PTPVSAFLAVIAKGAALAAVF), 303–323 (VFFALLVIAAAAMIAGTVSAL), 331–351 (LLALSGVANAGYLLVPIAISV), 363–383 (VFYLVAYLLMNVGAFAVVTVI), 406–426 (AAAMLIFILSFSGLPVTAGFF), 442–462 (WLVAIMVVSTVISYYFYFGII), and 485–505 (TVIWICAAATVALGVLPGPLM).

Belongs to the complex I subunit 2 family. As to quaternary structure, NDH-1 is composed of 14 different subunits. Subunits NuoA, H, J, K, L, M, N constitute the membrane sector of the complex.

Its subcellular location is the cell membrane. It catalyses the reaction a quinone + NADH + 5 H(+)(in) = a quinol + NAD(+) + 4 H(+)(out). In terms of biological role, NDH-1 shuttles electrons from NADH, via FMN and iron-sulfur (Fe-S) centers, to quinones in the respiratory chain. The immediate electron acceptor for the enzyme in this species is believed to be a menaquinone. Couples the redox reaction to proton translocation (for every two electrons transferred, four hydrogen ions are translocated across the cytoplasmic membrane), and thus conserves the redox energy in a proton gradient. In Paenibacillus sp. (strain JDR-2), this protein is NADH-quinone oxidoreductase subunit N.